Here is a 194-residue protein sequence, read N- to C-terminus: 5'-deoxynucleotidase PBPRA2627 (194 aa).

Substrate contacts are provided by residues 18-19 (RW) and H33. The region spanning 30–142 (ISEHSLQVAF…VKQADSLCAY (113 aa)) is the HD domain. A divalent metal cation is bound by residues H33, H68, and D69. Residues D69, 77 to 80 (DMPT), and D137 each bind substrate. D137 provides a ligand contact to a divalent metal cation.

It belongs to the 5DNU family. In terms of assembly, homodimer. It depends on a divalent metal cation as a cofactor.

It localises to the cytoplasm. It carries out the reaction a 2'-deoxyribonucleoside 5'-phosphate + H2O = a 2'-deoxyribonucleoside + phosphate. In terms of biological role, catalyzes the strictly specific dephosphorylation of 2'-deoxyribonucleoside 5'-monophosphates. This chain is 5'-deoxynucleotidase PBPRA2627, found in Photobacterium profundum (strain SS9).